Reading from the N-terminus, the 540-residue chain is Sterol 14-alpha demethylase (540 aa).

A helical transmembrane segment spans residues P41–I61. Heme is bound at residue C485.

Belongs to the cytochrome P450 family. The cofactor is heme.

Its subcellular location is the membrane. It catalyses the reaction a 14alpha-methyl steroid + 3 reduced [NADPH--hemoprotein reductase] + 3 O2 = a Delta(14) steroid + formate + 3 oxidized [NADPH--hemoprotein reductase] + 4 H2O + 4 H(+). The catalysed reaction is a 14alpha-methyl steroid + reduced [NADPH--hemoprotein reductase] + O2 = a 14alpha-hydroxymethyl steroid + oxidized [NADPH--hemoprotein reductase] + H2O + H(+). The enzyme catalyses a 14alpha-hydroxymethyl steroid + reduced [NADPH--hemoprotein reductase] + O2 = a 14alpha-formyl steroid + oxidized [NADPH--hemoprotein reductase] + 2 H2O + H(+). It carries out the reaction a 14alpha-formyl steroid + reduced [NADPH--hemoprotein reductase] + O2 = a Delta(14) steroid + formate + oxidized [NADPH--hemoprotein reductase] + H2O + 2 H(+). It catalyses the reaction lanosterol + 3 reduced [NADPH--hemoprotein reductase] + 3 O2 = 4,4-dimethyl-5alpha-cholesta-8,14,24-trien-3beta-ol + formate + 3 oxidized [NADPH--hemoprotein reductase] + 4 H2O + 4 H(+). The catalysed reaction is lanosterol + reduced [NADPH--hemoprotein reductase] + O2 = 32-hydroxylanosterol + oxidized [NADPH--hemoprotein reductase] + H2O + H(+). The enzyme catalyses 32-hydroxylanosterol + reduced [NADPH--hemoprotein reductase] + O2 = 32-oxolanosterol + oxidized [NADPH--hemoprotein reductase] + 2 H2O + H(+). It carries out the reaction 32-oxolanosterol + reduced [NADPH--hemoprotein reductase] + O2 = 4,4-dimethyl-5alpha-cholesta-8,14,24-trien-3beta-ol + formate + oxidized [NADPH--hemoprotein reductase] + H2O + 2 H(+). It catalyses the reaction eburicol + 3 reduced [NADPH--hemoprotein reductase] + 3 O2 = 14-demethyleburicol + formate + 3 oxidized [NADPH--hemoprotein reductase] + 4 H2O + 4 H(+). The catalysed reaction is eburicol + reduced [NADPH--hemoprotein reductase] + O2 = 32-hydroxyeburicol + oxidized [NADPH--hemoprotein reductase] + H2O + H(+). The enzyme catalyses 32-hydroxyeburicol + reduced [NADPH--hemoprotein reductase] + O2 = 32-oxoeburicol + oxidized [NADPH--hemoprotein reductase] + 2 H2O + H(+). It carries out the reaction 32-oxoeburicol + reduced [NADPH--hemoprotein reductase] + O2 = 14-demethyleburicol + formate + oxidized [NADPH--hemoprotein reductase] + H2O + 2 H(+). The protein operates within steroid biosynthesis; sterol biosynthesis. Functionally, sterol 14-alpha demethylase; part of the gene cluster that mediates the biosynthesis of tetrahydropyranyl antifungal agent lanomycin that acts as an inhibitor of CYP51 and blocks the ergosterol biosynthesis. Sterol 14-alpha-demethylase plays a critical role in the biosynthesis of ergosterol, the major sterol component in fungal membranes that participates in a variety of functions. Acts as a self-resistant CYP51 that contains mutations found in CYP51s isolated from azole resistance strains and that is not inhibited by the final product of the cluster, lanomycin. In Pyrenophora dematioidea (Helminthosporium dematioideum), this protein is Sterol 14-alpha demethylase.